The following is a 101-amino-acid chain: Small ribosomal subunit protein uS14 (101 aa).

This sequence belongs to the universal ribosomal protein uS14 family. In terms of assembly, part of the 30S ribosomal subunit. Contacts proteins S3 and S10.

In terms of biological role, binds 16S rRNA, required for the assembly of 30S particles and may also be responsible for determining the conformation of the 16S rRNA at the A site. The protein is Small ribosomal subunit protein uS14 of Burkholderia vietnamiensis (strain G4 / LMG 22486) (Burkholderia cepacia (strain R1808)).